A 289-amino-acid polypeptide reads, in one-letter code: RNA-binding protein CP31B, chloroplastic (289 aa).

The N-terminal 71 residues, 1–71 (MTSSVLTPSL…NSSPVVTFVS (71 aa)), are a transit peptide targeting the chloroplast. RRM domains follow at residues 113-191 (AKLF…RAAP) and 207-285 (FRIY…VAEE).

ADP-ribosylated by the Pseudomonas syringae type III effector HopU1. ADP-ribosylation reduces the ability of the protein to bind RNA.

The protein localises to the plastid. The protein resides in the chloroplast. Required for specific RNA editing events in chloroplasts and stabilizes specific chloroplast mRNAs. The polypeptide is RNA-binding protein CP31B, chloroplastic (Arabidopsis thaliana (Mouse-ear cress)).